The primary structure comprises 237 residues: Class B acid phosphatase (237 aa).

The first 23 residues, 1–23 (MKKITLALSAVCLLFTLNHSANA), serve as a signal peptide directing secretion. D69 serves as the catalytic Nucleophile. Mg(2+)-binding residues include D69 and D71. The Proton donor role is filled by D71. Substrate-binding positions include 137–138 (TG) and K177. Residue D192 participates in Mg(2+) binding.

This sequence belongs to the class B bacterial acid phosphatase family. In terms of assembly, homotetramer. Mg(2+) is required as a cofactor.

It localises to the periplasm. It catalyses the reaction a phosphate monoester + H2O = an alcohol + phosphate. Functionally, dephosphorylates several organic phosphate monoesters including monophosphate nucleotides (NMPs), coenzyme A (CoA), nicotinamide adenine dinucleotide phosphate (NADP), flavin mononucleotide (FMN) and phosphorylated 5-6 carbon sugars in vitro. Also has a phosphotransferase activity catalyzing the transfer of low-energy phosphate groups from organic phosphate monoesters to free hydroxyl groups of various organic compounds. This Salmonella typhi protein is Class B acid phosphatase (aphA).